The chain runs to 185 residues: Elongation factor P (185 aa).

It belongs to the elongation factor P family.

It is found in the cytoplasm. The protein operates within protein biosynthesis; polypeptide chain elongation. Involved in peptide bond synthesis. Stimulates efficient translation and peptide-bond synthesis on native or reconstituted 70S ribosomes in vitro. Probably functions indirectly by altering the affinity of the ribosome for aminoacyl-tRNA, thus increasing their reactivity as acceptors for peptidyl transferase. The polypeptide is Elongation factor P (Salinispora tropica (strain ATCC BAA-916 / DSM 44818 / JCM 13857 / NBRC 105044 / CNB-440)).